The following is a 100-amino-acid chain: Small ribosomal subunit protein uS14 (100 aa).

The protein belongs to the universal ribosomal protein uS14 family. As to quaternary structure, part of the 30S ribosomal subunit. Contacts proteins S3 and S10.

Binds 16S rRNA, required for the assembly of 30S particles and may also be responsible for determining the conformation of the 16S rRNA at the A site. The chain is Small ribosomal subunit protein uS14 from Prochlorococcus marinus (strain MIT 9301).